We begin with the raw amino-acid sequence, 177 residues long: MSRIGKRPVTVPSGVTATVEGQTVKMKGPKGELRFVVHDDVEVKLEDGAVKVAPRYETKRAQALYGTARAQVANLVAGVTKGFEKKLEIIGVGYRAALQGKSLQLALGYSHDVNYAVPEGITIAVPKPTEITITGNDAQRVGQVAAEIRGYRPPEPYKGKGVKYADETIFRKEGKKK.

It belongs to the universal ribosomal protein uL6 family. Part of the 50S ribosomal subunit.

In terms of biological role, this protein binds to the 23S rRNA, and is important in its secondary structure. It is located near the subunit interface in the base of the L7/L12 stalk, and near the tRNA binding site of the peptidyltransferase center. The polypeptide is Large ribosomal subunit protein uL6 (Nitrobacter winogradskyi (strain ATCC 25391 / DSM 10237 / CIP 104748 / NCIMB 11846 / Nb-255)).